Reading from the N-terminus, the 406-residue chain is MRNIIVKKLDVEPIEERPTEIVERKGLGHPDSICDGIAESVSRALCKMYMEKFGTILHHNTDQVELVGGHAYPKFGGGVMVSPIYILLSGRATMEILDKEKNEVIKLPVGTTAVKAAKEYLKKVLRNVDVDKDVIIDCRIGQGSMDLVDVFERQKNEVPLANDTSFGVGYAPLSTTERLVLETERFLNSDELKNEIPAVGEDIKVMGLREGKKITLTIAMAVVDRYVKNIEEYKEVIEKVRKKVEDLAKKIADGYEVEIHINTADDYERESVYLTVTGTSAEMGDDGSVGRGNRVNGLITPFRPMSMEAASGKNPVNHVGKIYNILANLIANDIAKLEGVKECYVRILSQIGKPINEPKALDIEIITEDSYDIKDIEPKAKEIANKWLDNIMEVQKMIVEGKVTTF.

Residue 141-146 (GQGSMD) coordinates ATP.

Belongs to the AdoMet synthase 2 family. In terms of assembly, homodimer. Mg(2+) is required as a cofactor.

It catalyses the reaction L-methionine + ATP + H2O = S-adenosyl-L-methionine + phosphate + diphosphate. Its pathway is amino-acid biosynthesis; S-adenosyl-L-methionine biosynthesis; S-adenosyl-L-methionine from L-methionine: step 1/1. Catalyzes the formation of S-adenosylmethionine from methionine and ATP. This Methanocaldococcus jannaschii (strain ATCC 43067 / DSM 2661 / JAL-1 / JCM 10045 / NBRC 100440) (Methanococcus jannaschii) protein is S-adenosylmethionine synthase (mat).